The chain runs to 494 residues: MKKQAFSSEQYLNLQRDHILERINQFDGKLYLEFGGKMLEDFHAARVLPGYEPDNKIKLLQELKEQVEVVIAINASNIEHSKARGDLGISYDQEVLRLIDKFNELGIFVGSVVITQYAGQPAADAFRNQLEKNGIDSYLHYPIKGYPTDMDHIISPEGMGKNDYIKTSRNLIVVTAPGPGSGKLATCMSNMYHDQINGIKSGYAKFETFPVWNLPLHHPVNLAYEAATADLDDVNMIDPFHLQTYGETTVNYNRDIEIFPVLKRMLERILGKSPYASPTDMGVNMVGFAITDDEAAVEASKQEIIRRYYQTVLDFKAEKVGEAAVKKIELLMNDLGITPADRKVAVVARQKAEETGGPALAFELPNGEIITGKNSELFGPTAAALINAIKKSADIAKEVKLIEPEVVKPIQGLKIDHLGSRNPRLHSNEILIALAITATENPDAARAMEELGNLKGSEAHSTIILTDEDKNVLRKLGINVTFDPYYQYDRLYRK.

It belongs to the UPF0371 family.

This is UPF0371 protein SP_0341 from Streptococcus pneumoniae serotype 4 (strain ATCC BAA-334 / TIGR4).